Consider the following 2193-residue polypeptide: Genome polyprotein (2193 aa).

Residues 1–22 (MGSQVSTQRSGSHENSNSATEG) are disordered. A lipid anchor (N-myristoyl glycine; by host) is attached at Gly2. Over 2–1503 (GSQVSTQRSG…HLNRAVLVMQ (1502 aa)) the chain is Cytoplasmic. An amphipathic alpha-helix region spans residues 568–588 (RVADVIESSIGDSVSRALTQA). Catalysis depends on for protease 2A activity residues His883 and Asp901. Zn(2+)-binding residues include Cys918 and Cys920. Residue Cys972 is the For protease 2A activity of the active site. Zn(2+)-binding residues include Cys978 and His980. The 159-residue stretch at 1216–1374 (EKRMNNYMQF…SKTDLGRLDA (159 aa)) folds into the SF3 helicase domain. Residue 1240–1247 (GSPGTGKS) participates in ATP binding. Cys1381, Cys1392, and Cys1397 together coordinate Zn(2+). Residues 1381 to 1397 (CSENNTANFKRCSPLVC) form a C4-type; degenerate zinc finger. An intramembrane segment occupies 1504–1519 (SIATVVAVVSLVYVIY). The Cytoplasmic segment spans residues 1520–2193 (KLFAGFQGAY…NLRRNWLELF (674 aa)). Tyr1529 is subject to O-(5'-phospho-RNA)-tyrosine. One can recognise a Peptidase C3 domain in the interval 1549–1727 (GPSLDFALSL…FCAGLKRSYF (179 aa)). Residues His1588, Glu1619, and Cys1695 each act as for protease 3C activity in the active site. One can recognise a RdRp catalytic domain in the interval 1958 to 2073 (GSLFAFDYSG…ASYPFPIDCL (116 aa)). Mg(2+) contacts are provided by Asp1964 and Asp2060.

This sequence belongs to the picornaviruses polyprotein family. In terms of assembly, interacts with capsid protein VP1 and capsid protein VP3 to form heterotrimeric protomers. Interacts with capsid protein VP0, and capsid protein VP3 to form heterotrimeric protomers. Five protomers subsequently associate to form pentamers which serve as building blocks for the capsid. Interacts with capsid protein VP2, capsid protein VP3 and capsid protein VP4 following cleavage of capsid protein VP0. Interacts with host SCARB2. Interacts with host ARF6; this interaction mediates viral endocytosis. As to quaternary structure, interacts with capsid protein VP1 and capsid protein VP3 in the mature capsid. Interacts with host SCARB2. In terms of assembly, interacts with capsid protein VP0 and capsid protein VP1 to form heterotrimeric protomers. Five protomers subsequently associate to form pentamers which serve as building blocks for the capsid. Interacts with capsid protein VP4 in the mature capsid. Interacts with protein 2C; this interaction may be important for virion morphogenesis. Interacts with capsid protein VP1 and capsid protein VP3. As to quaternary structure, homodimer. In terms of assembly, interacts with host BAX; this interaction activates the mitochondrial apoptotic pathway. Interacts with host ILF2. Homohexamer; forms a hexameric ring structure with 6-fold symmetry characteristic of AAA+ ATPases. Interacts (via N-terminus) with host RTN3 (via reticulon domain); this interaction is important for viral replication. Interacts with capsid protein VP3; this interaction may be important for virion morphogenesis. As to quaternary structure, interacts with protein 3CD. In terms of assembly, homodimer. Interacts with host GBF1. Interacts (via GOLD domain) with host ACBD3 (via GOLD domain); this interaction allows the formation of a viral protein 3A/ACBD3 heterotetramer with a 2:2 stoichiometry, which will stimulate the recruitment of host PI4KB in order to synthesize PI4P at the viral RNA replication sites. Interacts with RNA-directed RNA polymerase. As to quaternary structure, interacts with host IFIH1/MDA5; this interaction inhibits host IFIH1. In terms of assembly, interacts with protein 3AB and with RNA-directed RNA polymerase. Interacts with Viral protein genome-linked and with protein 3CD. Mg(2+) is required as a cofactor. In terms of processing, specific enzymatic cleavages in vivo by the viral proteases yield processing intermediates and the mature proteins. Post-translationally, myristoylation is required for the formation of pentamers during virus assembly. Further assembly of 12 pentamers and a molecule of genomic RNA generates the provirion. During virion maturation, immature virions are rendered infectious following cleavage of VP0 into VP4 and VP2. This maturation seems to be an autocatalytic event triggered by the presence of RNA in the capsid and it is followed by a conformational change infectious virion. In terms of processing, myristoylation is required during RNA encapsidation and formation of the mature virus particle. Post-translationally, VPg is uridylylated by the polymerase into VPg-pUpU. This acts as a nucleotide-peptide primer for the genomic RNA replication.

It localises to the virion. The protein localises to the host cytoplasm. It is found in the host cytoplasmic vesicle membrane. The protein resides in the host nucleus. The catalysed reaction is a ribonucleoside 5'-triphosphate + H2O = a ribonucleoside 5'-diphosphate + phosphate + H(+). It carries out the reaction Selective cleavage of Tyr-|-Gly bond in the picornavirus polyprotein.. It catalyses the reaction RNA(n) + a ribonucleoside 5'-triphosphate = RNA(n+1) + diphosphate. The enzyme catalyses Selective cleavage of Gln-|-Gly bond in the poliovirus polyprotein. In other picornavirus reactions Glu may be substituted for Gln, and Ser or Thr for Gly.. Replication or transcription is subject to high level of random mutations by the nucleotide analog ribavirin. In terms of biological role, forms an icosahedral capsid of pseudo T=3 symmetry with capsid proteins VP2 and VP3. The capsid is 300 Angstroms in diameter, composed of 60 copies of each capsid protein and enclosing the viral positive strand RNA genome. Capsid protein VP1 mainly forms the vertices of the capsid. Capsid protein VP1, together with VP2, interacts with host cell receptor SCARB2 to provide virion attachment to target host cells. This attachment induces virion internalization. After binding to its receptor, the capsid undergoes conformational changes. Capsid protein VP1 N-terminus (that contains an amphipathic alpha-helix) and capsid protein VP4 are externalized. Together, they shape a pore in the host membrane through which viral genome is translocated to host cell cytoplasm. Functionally, forms an icosahedral capsid of pseudo T=3 symmetry with capsid proteins VP2 and VP3. The capsid is 300 Angstroms in diameter, composed of 60 copies of each capsid protein and enclosing the viral positive strand RNA genome. Capsid protein VP2, together with VP1, interacts with host cell receptor SCARB2 to provide virion attachment to target host cells. Its function is as follows. Forms an icosahedral capsid of pseudo T=3 symmetry with capsid proteins VP2 and VP3. The capsid is 300 Angstroms in diameter, composed of 60 copies of each capsid protein and enclosing the viral positive strand RNA genome. Lies on the inner surface of the capsid shell. After binding to the host receptor, the capsid undergoes conformational changes. Capsid protein VP4 is released, Capsid protein VP1 N-terminus is externalized, and together, they shape a pore in the host membrane through which the viral genome is translocated into the host cell cytoplasm. In terms of biological role, component of immature procapsids, which is cleaved into capsid proteins VP4 and VP2 after maturation. Allows the capsid to remain inactive before the maturation step. Functionally, cysteine protease that cleaves viral polyprotein and specific host proteins. It is responsible for the autocatalytic cleavage between the P1 and P2 regions, which is the first cleavage occurring in the polyprotein. Also cleaves the host translation initiation factor EIF4G1, in order to shut down the capped cellular mRNA translation. Inhibits the host nucleus-cytoplasm protein and RNA trafficking by cleaving host members of the nuclear pores. Counteracts stress granule formation probably by antagonizing its assembly or promoting its dissassembly. Cleaves and inhibits host IFIH1/MDA5, thereby inhibiting the type-I IFN production and the establishment of the antiviral state. Cleaves and inhibits host MAVS, thereby inhibiting the type-I IFN production and the establishment of the antiviral state. Its function is as follows. Plays an essential role in the virus replication cycle by acting as a viroporin. Creates a pore in the host endoplasmic reticulum and as a consequence releases Ca2+ in the cytoplasm of infected cell. In turn, high levels of cytoplasmic calcium may trigger membrane trafficking and transport of viral ER-associated proteins to viroplasms, sites of viral genome replication. Induces and associates with structural rearrangements of intracellular membranes. Displays RNA-binding, nucleotide binding and NTPase activities. May play a role in virion morphogenesis and viral RNA encapsidation by interacting with the capsid protein VP3. In terms of biological role, localizes the viral replication complex to the surface of membranous vesicles. Together with protein 3CD binds the Cis-Active RNA Element (CRE) which is involved in RNA synthesis initiation. Acts as a cofactor to stimulate the activity of 3D polymerase, maybe through a nucleid acid chaperone activity. Functionally, localizes the viral replication complex to the surface of membranous vesicles. It inhibits host cell endoplasmic reticulum-to-Golgi apparatus transport and causes the disassembly of the Golgi complex, possibly through GBF1 interaction. This would result in depletion of MHC, trail receptors and IFN receptors at the host cell surface. Plays an essential role in viral RNA replication by recruiting ACBD3 and PI4KB at the viral replication sites, thereby allowing the formation of the rearranged membranous structures where viral replication takes place. Its function is as follows. Acts as a primer for viral RNA replication and remains covalently bound to viral genomic RNA. VPg is uridylylated prior to priming replication into VPg-pUpU. The oriI viral genomic sequence may act as a template for this. The VPg-pUpU is then used as primer on the genomic RNA poly(A) by the RNA-dependent RNA polymerase to replicate the viral genome. During genome replication, the VPg-RNA linkage is removed by the host TDP2, thereby accelerating replication. During the late stage of the replication cycle, host TDP2 is excluded from sites of viral RNA synthesis and encapsidation, allowing for the generation of progeny virions. Involved in the viral replication complex and viral polypeptide maturation. It exhibits protease activity with a specificity and catalytic efficiency that is different from protease 3C. Protein 3CD lacks polymerase activity. Protein 3CD binds to the 5'UTR of the viral genome. In terms of biological role, major viral protease that mediates proteolytic processing of the polyprotein. Cleaves host EIF5B, contributing to host translation shutoff. Also cleaves host PABPC1, contributing to host translation shutoff. Disassembles host cytoplasmic stress granules by cleaving host G3BP1, although this effect is less prononced than the inhibition induced by protease 2A. Cleaves host RIGI and thus contributes to the inhibition of type I interferon production. Cleaves host IRF7 and thus contributes to the inhibition of type I interferon production. Cleaves host HNRNPA1 thereby increasing the translation of apoptosis protease activating factor APAF1, leading to apoptosis of the host cell. Cleaves host NLRP1, triggers host N-glycine-mediated degradation of the autoinhibitory NLRP1 N-terminal fragment. Functionally, replicates the viral genomic RNA on the surface of intracellular membranes. May form linear arrays of subunits that propagate along a strong head-to-tail interaction called interface-I. Covalently attaches UMP to a tyrosine of VPg, which is used to prime RNA synthesis. The positive stranded RNA genome is first replicated at virus induced membranous vesicles, creating a dsRNA genomic replication form. This dsRNA is then used as template to synthesize positive stranded RNA genomes. ss(+)RNA genomes are either translated, replicated or encapsidated. In Human enterovirus 71 (strain 7423/MS/87) (EV71), this protein is Genome polyprotein.